A 203-amino-acid polypeptide reads, in one-letter code: CCG-binding protein 1 (203 aa).

Residues 156-178 form a disordered region; sequence IPDGLPKSEQELEEEEKSKMPDS. The segment covering 161–175 has biased composition (basic and acidic residues); the sequence is PKSEQELEEEEKSKM.

As to quaternary structure, homotetramer. Interacts with MEE12/CCG, MED7A, MED7B, MED9, AGL49, AGL53, AGL75, AGL80, AGL81, AGL82, AGL103 and NRPB1 (via CTD). Expressed in roots, leaves, stems and flowers. Expressed in the central cell of mature ovules.

It localises to the nucleus. It is found in the cytoplasm. Its function is as follows. Required for the development of the one-cell zygote and endosperm in embryos. Required for micropylar pollen tube guidance, but has no effect on ovule development and gametophytic cell fate specification. May connect transcription factors and the Pol II machinery to regulate pollen tube attraction, via its interactions with AGAMOUS-like (AGL) transcription factors, MEE14/CCG and the Mediator complex. In Arabidopsis thaliana (Mouse-ear cress), this protein is CCG-binding protein 1.